The chain runs to 538 residues: Methyl-accepting chemotaxis protein NahY (538 aa).

The Cytoplasmic portion of the chain corresponds to 1–9; it reads MQQFTIRTR. Residues 10–30 form a helical membrane-spanning segment; it reads LLMLVGAMFIGFITIELMGFS. Over 31–187 the chain is Periplasmic; the sequence is ALQRGVASLN…AVVLYDSSRT (157 aa). A helical transmembrane segment spans residues 188-208; it reads MLALLLLGILICGGVFATRLI. Residues 209-261 form the HAMP domain; sequence RSIIHPLTTLKDAAARVALGDLSQSIQVSGRNEVTDVQQSVQAMQANLRNTLQ. Topologically, residues 209–538 are cytoplasmic; the sequence is RSIIHPLTTL…LNNLVNRFSM (330 aa). A Methyl-accepting transducer domain is found at 266-502; the sequence is SAAQLAAAAE…EVDRNLVAIS (237 aa).

It belongs to the methyl-accepting chemotaxis (MCP) protein family.

It is found in the cell inner membrane. In terms of biological role, chemotactic-signal transducers respond to changes in the concentration of attractants and repellents in the environment, transduce a signal from the outside to the inside of the cell, and facilitate sensory adaptation through the variation of the level of methylation. Chemoreceptor for naphthalene or a related compound. May facilitate biodegradation. This chain is Methyl-accepting chemotaxis protein NahY (nahY), found in Pseudomonas putida (Arthrobacter siderocapsulatus).